The primary structure comprises 498 residues: MMLSSTSLYAAIDLGSNSFHMLVVREVAGSIQTLARIKRKVRLAAGLDNQNHLSQEAMERGWQCLKLFSERLQDIPLDQIRVVATATLRLASNADEFLRTATEILGCPIQVISGEEEARLIYHGVAHTTGGPEQRLVVDIGGGSTELVTGNGAQANILVSLSMGCVTWLERYFGDRHLAKENFERAELAAHEMIKPVAQRFREHGWQVCVGASGTVQALQEIMVAQGMDELITLAKLQQLKQRAIQCGKLEELEIPGLTLERALVFPSGLSILIAIFQELSIESMTLAGGALREGLVYGMLHLPVEQDIRRRTLRNLQRRYLLDTEQAKRVSCLADNFFLQVEKEWHLDGRCREFLQNACLIHEIGLSVDFKHAPQHAAYLIRNLDLPGFTPAQKLLLSALLQNQSDTIDLSLLNQQNALPADMAQHLCRLLRLAIIFSSRRRDDTLPAVRLRADNNALYVLVPQGWLEQHPYRAEALEQESHWQSYVQWPLLLEELS.

It belongs to the GppA/Ppx family. GppA subfamily.

It catalyses the reaction guanosine 3'-diphosphate 5'-triphosphate + H2O = guanosine 3',5'-bis(diphosphate) + phosphate + H(+). It functions in the pathway purine metabolism; ppGpp biosynthesis; ppGpp from GTP: step 2/2. Its function is as follows. Catalyzes the conversion of pppGpp to ppGpp. Guanosine pentaphosphate (pppGpp) is a cytoplasmic signaling molecule which together with ppGpp controls the 'stringent response', an adaptive process that allows bacteria to respond to amino acid starvation, resulting in the coordinated regulation of numerous cellular activities. The sequence is that of Guanosine-5'-triphosphate,3'-diphosphate pyrophosphatase from Yersinia pseudotuberculosis serotype O:1b (strain IP 31758).